The following is a 358-amino-acid chain: MATH domain and coiled-coil domain-containing protein At3g58440 (358 aa).

An MATH domain is found at 8–131 (QDKFTWVLEK…NDRLTIVAEV (124 aa)). Positions 250 to 309 (LRDAGFKVDWLEKKLDQLKEKKEEEMSGLARLHEIEERLQKLKLLFVDLESQLQKEKVEA) form a coiled coil.

This Arabidopsis thaliana (Mouse-ear cress) protein is MATH domain and coiled-coil domain-containing protein At3g58440.